The primary structure comprises 182 residues: uncharacterized protein (182 aa).

Residues Met1–Ala29 form the signal peptide. Residues Trp152 to Val174 traverse the membrane as a helical segment.

The protein resides in the membrane. This is an uncharacterized protein from Bacillus subtilis (strain 168).